A 70-amino-acid polypeptide reads, in one-letter code: Beta-defensin 107 (70 aa).

The first 26 residues, 1–26 (MPGAMKIFVFILAALILLAQIFQART), serve as a signal peptide directing secretion. 2 disulfides stabilise this stretch: Cys-41-Cys-55 and Cys-45-Cys-64.

This sequence belongs to the beta-defensin family. In terms of tissue distribution, specifically expressed in testis.

It is found in the secreted. Functionally, has antibacterial activity. The sequence is that of Beta-defensin 107 (DEFB107A) from Homo sapiens (Human).